A 341-amino-acid polypeptide reads, in one-letter code: Methionine import ATP-binding protein MetN 3 (341 aa).

An ABC transporter domain is found at 2-241 (ILLENVKKIY…PQQDITKRFV (240 aa)). 38–45 (GYSGAGKS) lines the ATP pocket.

The protein belongs to the ABC transporter superfamily. Methionine importer (TC 3.A.1.24) family. In terms of assembly, the complex is composed of two ATP-binding proteins (MetN), two transmembrane proteins (MetI) and a solute-binding protein (MetQ).

The protein localises to the cell membrane. It catalyses the reaction L-methionine(out) + ATP + H2O = L-methionine(in) + ADP + phosphate + H(+). It carries out the reaction D-methionine(out) + ATP + H2O = D-methionine(in) + ADP + phosphate + H(+). Part of the ABC transporter complex MetNIQ involved in methionine import. Responsible for energy coupling to the transport system. This Bacillus cereus (strain ZK / E33L) protein is Methionine import ATP-binding protein MetN 3.